A 508-amino-acid polypeptide reads, in one-letter code: Erythropoietin receptor (508 aa).

Positions 1–24 are cleaved as a signal peptide; that stretch reads MDHLGASLWPQVGSLCLLLAGAAW. At 25-250 the chain is on the extracellular side; it reads APPPNLPDPK…SLLTPSDLDP (226 aa). Cysteine 52 and cysteine 62 are disulfide-bonded. N-linked (GlcNAc...) asparagine glycosylation occurs at asparagine 76. The cysteines at positions 91 and 107 are disulfide-linked. One can recognise a Fibronectin type-III domain in the interval 147-247; that stretch reads APVGLVARLA…EPVSLLTPSD (101 aa). Positions 233-237 match the WSXWS motif motif; sequence WSAWS. The helical transmembrane segment at 251–273 threads the bilayer; sequence LILTLSLILVVILVLLTVLALLS. The Cytoplasmic segment spans residues 274 to 508; that stretch reads HRRALKQKIW…PLPPSYVACS (235 aa). A Glycyl lysine isopeptide (Lys-Gly) (interchain with G-Cter in ubiquitin) cross-link involves residue lysine 281. The short motif at 282–290 is the Box 1 motif element; it reads IWPGIPSPE. A phosphotyrosine; by JAK2 mark is found at tyrosine 368 and tyrosine 426. The ITIM motif motif lies at 452–457; it reads LKYLYL. Residue lysine 453 forms a Glycyl lysine isopeptide (Lys-Gly) (interchain with G-Cter in ubiquitin) linkage. Phosphotyrosine; by JAK2 occurs at positions 454, 456, 468, 485, 489, and 504. The segment at 454–456 is required for high-affinity SOCS3 binding; it reads YLY. The disordered stretch occupies residues 467–494; the sequence is DYSSGDSQGAQGGLSDGPYSNPYENSLI.

It belongs to the type I cytokine receptor family. Type 1 subfamily. Forms homodimers on EPO stimulation. The tyrosine-phosphorylated form interacts with several SH2 domain-containing proteins including LYN, the adapter protein SH2B2, PTPN6, PTPN11, JAK2, PI3 kinases, STAT5A/B, SOCS3, CRKL. Interacts with INPP5D/SHIP1. SH2B2 binding inhibits the JAK-STAT signaling. Interacts with RHEX; this interaction occurs in a erythropoietin (EPO)-dependent manner. Interacts with ATXN2L. Post-translationally, on EPO stimulation, phosphorylated on C-terminal tyrosine residues by JAK2. The phosphotyrosine motifs are also recruitment sites for several SH2-containing proteins and adapter proteins which mediate cell proliferation. Phosphorylation on Tyr-454 is required for PTPN6 interaction, Tyr-426 for PTPN11. Tyr-426 is also required for SOCS3 binding, but Tyr-454/Tyr-456 motif is the preferred binding site. Ubiquitinated by the ECS(SOCS2) complex following ligand-binding and phosphorylation by JAK2, leading to its degradation by the proteasome. Regulation by the ECS(SOCS2) complex acts as a negative feedback loop of erythropoietin-mediated signaling pathway. Ubiquitination at Lys-281 mediates receptor internalization, whereas ubiquitination at Lys-453 promotes trafficking of activated receptors to the lysosomes for degradation. Ubiquitinated by NOSIP; appears to be either multi-monoubiquitinated or polyubiquitinated. Ubiquitination mediates proliferation and survival of EPO-dependent cells. In terms of tissue distribution, erythroid cells and erythroid progenitor cells. Isoform EPOR-F is the most abundant form in EPO-dependent erythroleukemia cells and in late-stage erythroid progenitors. As to expression, isoform EPOR-S and isoform EPOR-T are the predominant forms in bone marrow. In terms of tissue distribution, isoform EPOR-S and isoform EPOR-T are the predominant forms in bone marrow. Isoform EPOR-T is the most abundant from in early-stage erythroid progenitor cells.

The protein localises to the cell membrane. The protein resides in the secreted. In terms of biological role, receptor for erythropoietin, which mediates erythropoietin-induced erythroblast proliferation and differentiation. Upon EPO stimulation, EPOR dimerizes triggering the JAK2/STAT5 signaling cascade. In some cell types, can also activate STAT1 and STAT3. May also activate the LYN tyrosine kinase. Its function is as follows. Acts as a dominant-negative receptor of EPOR-mediated signaling. This chain is Erythropoietin receptor, found in Homo sapiens (Human).